We begin with the raw amino-acid sequence, 253 residues long: Alpha-acetolactate decarboxylase (253 aa).

The protein belongs to the alpha-acetolactate decarboxylase family.

The enzyme catalyses (2S)-2-acetolactate + H(+) = (R)-acetoin + CO2. It functions in the pathway polyol metabolism; (R,R)-butane-2,3-diol biosynthesis; (R,R)-butane-2,3-diol from pyruvate: step 2/3. Converts acetolactate into acetoin. This chain is Alpha-acetolactate decarboxylase (alsD), found in Bacillus licheniformis (strain ATCC 14580 / DSM 13 / JCM 2505 / CCUG 7422 / NBRC 12200 / NCIMB 9375 / NCTC 10341 / NRRL NRS-1264 / Gibson 46).